The sequence spans 150 residues: Meiotically up-regulated gene 108 protein (150 aa).

The segment covering 1-11 (MANRFTSSDQT) has biased composition (polar residues). The segment at 1–150 (MANRFTSSDQ…RDISLLGSTI (150 aa)) is disordered. The segment covering 12–23 (QETHGHHVDKHS) has biased composition (basic and acidic residues). Residues 83-93 (NRSSQHTGRVN) are compositionally biased toward polar residues.

It is found in the cytoplasm. It localises to the nucleus. In terms of biological role, has a role in meiosis. The protein is Meiotically up-regulated gene 108 protein (mug108) of Schizosaccharomyces pombe (strain 972 / ATCC 24843) (Fission yeast).